Reading from the N-terminus, the 311-residue chain is Probable manganese-dependent inorganic pyrophosphatase (311 aa).

Mn(2+) contacts are provided by H9, D13, D15, D77, H99, and D151.

Belongs to the PPase class C family. Requires Mn(2+) as cofactor.

It localises to the cytoplasm. The catalysed reaction is diphosphate + H2O = 2 phosphate + H(+). The sequence is that of Probable manganese-dependent inorganic pyrophosphatase from Streptococcus agalactiae serotype Ia (strain ATCC 27591 / A909 / CDC SS700).